The following is a 149-amino-acid chain: Deoxyuridine 5'-triphosphate nucleotidohydrolase (149 aa).

Substrate contacts are provided by residues 70–72, N83, and 87–89; these read RSG and LID.

It belongs to the dUTPase family. It depends on Mg(2+) as a cofactor.

It catalyses the reaction dUTP + H2O = dUMP + diphosphate + H(+). The protein operates within pyrimidine metabolism; dUMP biosynthesis; dUMP from dCTP (dUTP route): step 2/2. This enzyme is involved in nucleotide metabolism: it produces dUMP, the immediate precursor of thymidine nucleotides and it decreases the intracellular concentration of dUTP so that uracil cannot be incorporated into DNA. This chain is Deoxyuridine 5'-triphosphate nucleotidohydrolase, found in Blochmanniella pennsylvanica (strain BPEN).